The following is a 105-amino-acid chain: Thioredoxin (105 aa).

One can recognise a Thioredoxin domain in the interval 2 to 105; it reads VKIVGDLTEF…KLEEAIKKYM (104 aa). Residues cysteine 32 and cysteine 35 each act as nucleophile in the active site. Cysteine 32 and cysteine 35 are joined by a disulfide. S-nitrosocysteine occurs at positions 69 and 73.

The protein belongs to the thioredoxin family. Post-translationally, may be nitrosylated on several cysteine residues, depending on the oxidation state. Nitrosylated Cys-73 may serve as donor for nitrosylation of target proteins.

The protein resides in the nucleus. The protein localises to the cytoplasm. Its subcellular location is the secreted. In terms of biological role, participates in various redox reactions through the reversible oxidation of its active center dithiol to a disulfide and catalyzes dithiol-disulfide exchange reactions. Plays a role in the reversible S-nitrosylation of cysteine residues in target proteins, and thereby contributes to the response to intracellular nitric oxide. Nitrosylates the active site Cys of CASP3 in response to nitric oxide (NO), and thereby inhibits caspase-3 activity. Induces the FOS/JUN AP-1 DNA binding activity in ionizing radiation (IR) cells through its oxidation/reduction status and stimulates AP-1 transcriptional activity. This chain is Thioredoxin (TXN), found in Ophiophagus hannah (King cobra).